The chain runs to 275 residues: Large ribosomal subunit protein uL2 (275 aa).

Disordered regions lie at residues 1 to 55 (MGIR…RHRG) and 218 to 275 (PHVR…RRRR). Over residues 259–275 (TRNKKKASSRLIVRRRR) the composition is skewed to basic residues.

This sequence belongs to the universal ribosomal protein uL2 family. As to quaternary structure, part of the 50S ribosomal subunit. Forms a bridge to the 30S subunit in the 70S ribosome.

Functionally, one of the primary rRNA binding proteins. Required for association of the 30S and 50S subunits to form the 70S ribosome, for tRNA binding and peptide bond formation. It has been suggested to have peptidyltransferase activity; this is somewhat controversial. Makes several contacts with the 16S rRNA in the 70S ribosome. The polypeptide is Large ribosomal subunit protein uL2 (Crocosphaera subtropica (strain ATCC 51142 / BH68) (Cyanothece sp. (strain ATCC 51142))).